Here is a 97-residue protein sequence, read N- to C-terminus: Mitochondrial import inner membrane translocase subunit Tim8 A (97 aa).

Residues 43-66 carry the Twin CX3C motif motif; it reads CWEKCMDKPGPKLDSRAEACFVNC. 2 disulfides stabilise this stretch: C43–C66 and C47–C62. A phosphoserine mark is found at S57, S87, S94, and S96.

It belongs to the small Tim family. In terms of assembly, heterohexamer; composed of 3 copies of TIMM8A and 3 copies of TIMM13, named soluble 70 kDa complex. Associates with the TIM22 complex, whose core is composed of TIMM22.

It localises to the mitochondrion inner membrane. In terms of biological role, mitochondrial intermembrane chaperone that participates in the import and insertion of some multi-pass transmembrane proteins into the mitochondrial inner membrane. Also required for the transfer of beta-barrel precursors from the TOM complex to the sorting and assembly machinery (SAM complex) of the outer membrane. Acts as a chaperone-like protein that protects the hydrophobic precursors from aggregation and guide them through the mitochondrial intermembrane space. The TIMM8-TIMM13 complex mediates the import of proteins such as TIMM23, SLC25A12/ARALAR1 and SLC25A13/ARALAR2, while the predominant TIMM9-TIMM10 70 kDa complex mediates the import of much more proteins. The sequence is that of Mitochondrial import inner membrane translocase subunit Tim8 A (Timm8a) from Rattus norvegicus (Rat).